We begin with the raw amino-acid sequence, 250 residues long: MTVKKLYFVPAGRCMLDRSSVNSTLTPGNLLNLPVWCYLLETEEGPILVDTGMPESAVHNENLFEGTFAEGQILPKMTEEDRIVTILKRVGYKPEDLLYIISSHLHFDHAGGNGAFSNTPIIIQRAEYEAAQYREEYLKECILPNLNYKIIEGDYEVVPGVQLLYTPGHSPGHQSLLIETEKSGLVLLTIDASYTKENFEDEVPFAGFDSELALSSIKRLKEVVMKEKPIVFFGHDIEQEKGCKVFPEYI.

7 residues coordinate Zn(2+): His104, His106, Asp108, His109, His169, Asp191, and His235.

It belongs to the metallo-beta-lactamase superfamily. As to quaternary structure, monomer. Zn(2+) serves as cofactor.

The catalysed reaction is an N-acyl-L-homoserine lactone + H2O = an N-acyl-L-homoserine + H(+). The sequence is that of N-acyl homoserine lactonase from Bacillus cereus.